The sequence spans 156 residues: Deoxyuridine 5'-triphosphate nucleotidohydrolase (156 aa).

Substrate is bound by residues 76–78, Asn89, 93–95, and Lys103; these read RSG and TVD.

This sequence belongs to the dUTPase family. Requires Mg(2+) as cofactor.

The enzyme catalyses dUTP + H2O = dUMP + diphosphate + H(+). It participates in pyrimidine metabolism; dUMP biosynthesis; dUMP from dCTP (dUTP route): step 2/2. Functionally, this enzyme is involved in nucleotide metabolism: it produces dUMP, the immediate precursor of thymidine nucleotides and it decreases the intracellular concentration of dUTP so that uracil cannot be incorporated into DNA. This Rhizobium leguminosarum bv. trifolii (strain WSM2304) protein is Deoxyuridine 5'-triphosphate nucleotidohydrolase.